A 248-amino-acid polypeptide reads, in one-letter code: MFLTRSEYDRGVNTFSPEGRLFQVEYAIEAVKLGSTSIGIKTSEGVLLAAEKRSTSKLMVNDAIEKISKVDQHIGVTFAGLIADSRTLVERAQIEAQNFWFTYNRKIRVEDVTQSVANLALQFGDDDVKASMSRPFGVAMLFAGVDQEGAKLFHLDPSGTFIDCKAKSIGAASDGAEQNLKEQYHDALTIKEGLKMALAILKQVMEEKLNSANVEVVVIKPTVDAKGRPIGEFTRVSNEELDQVITSL.

The protein belongs to the peptidase T1A family. The 26S proteasome consists of a 20S proteasome core and two 19S regulatory subunits. The 20S proteasome core is composed of 28 subunits that are arranged in four stacked rings, resulting in a barrel-shaped structure. The two end rings are each formed by seven alpha subunits, and the two central rings are each formed by seven beta subunits. The catalytic chamber with the active sites is on the inside of the barrel.

The protein localises to the cytoplasm. It is found in the nucleus. Its function is as follows. The proteasome is a multicatalytic proteinase complex which is characterized by its ability to cleave peptides with Arg, Phe, Tyr, Leu, and Glu adjacent to the leaving group at neutral or slightly basic pH. The proteasome has an ATP-dependent proteolytic activity. The protein is Proteasome subunit alpha type-5 (pas-5) of Caenorhabditis elegans.